The sequence spans 287 residues: Acetyl-coenzyme A carboxylase carboxyl transferase subunit beta (287 aa).

The region spanning 28-287 is the CoA carboxyltransferase N-terminal domain; sequence LWKKCPKCEN…ILSLLTNKVA (260 aa). Zn(2+) contacts are provided by cysteine 32, cysteine 35, cysteine 51, and cysteine 54. The C4-type zinc-finger motif lies at 32 to 54; the sequence is CPKCENVLYRPELEKNLDVCPKC.

Belongs to the AccD/PCCB family. As to quaternary structure, acetyl-CoA carboxylase is a heterohexamer composed of biotin carboxyl carrier protein (AccB), biotin carboxylase (AccC) and two subunits each of ACCase subunit alpha (AccA) and ACCase subunit beta (AccD). The cofactor is Zn(2+).

It is found in the cytoplasm. The enzyme catalyses N(6)-carboxybiotinyl-L-lysyl-[protein] + acetyl-CoA = N(6)-biotinyl-L-lysyl-[protein] + malonyl-CoA. The protein operates within lipid metabolism; malonyl-CoA biosynthesis; malonyl-CoA from acetyl-CoA: step 1/1. Its function is as follows. Component of the acetyl coenzyme A carboxylase (ACC) complex. Biotin carboxylase (BC) catalyzes the carboxylation of biotin on its carrier protein (BCCP) and then the CO(2) group is transferred by the transcarboxylase to acetyl-CoA to form malonyl-CoA. In Marinomonas sp. (strain MWYL1), this protein is Acetyl-coenzyme A carboxylase carboxyl transferase subunit beta.